A 334-amino-acid polypeptide reads, in one-letter code: UstYa family oxidase aprY (334 aa).

Residues 55-75 form a helical membrane-spanning segment; it reads IWILLTITNLIILGITVSMIV. N-linked (GlcNAc...) asparagine glycosylation is present at Asn-112. The HXXHC 1 motif lies at 185–189; that stretch reads HQIHC. Asn-214 is a glycosylation site (N-linked (GlcNAc...) asparagine). Positions 223-227 match the HXXHC 2 motif; that stretch reads HLGHC. A compositionally biased stretch (basic and acidic residues) spans 306 to 318; sequence SELGEKLGKHQKQ. The segment at 306–334 is disordered; that stretch reads SELGEKLGKHQKQEGVLGQAGHQHTKRHE.

Belongs to the ustYa family.

Its subcellular location is the membrane. It participates in secondary metabolite biosynthesis. Functionally, ustYa family oxidase; part of the gene cluster that mediates the biosynthesis of the asperipin-2a, a bicyclic peptide that possesses two macrocyclic ether rings consisting of 14- and 17-membered paracyclophans. Within the pathway, aprY is responsible for the synthesis of the bicyclic structure of asperipin-2a. The pathway starts with the processing of the precursor aprA by kexin proteases to produce 11 identical copies of the hexapeptide Phe-Tyr-Tyr-Thr-Gly-Tyr. Macrocyclization of asperipin-2a may accompany an alpha-hydroxylation-dehydration sequence to give an imine, which is readily hydrolyzed to yield putative ketone intermediate. The reductase aprR may be required for the final reduction to yield asperipin-2a. This Aspergillus flavus (strain ATCC 200026 / FGSC A1120 / IAM 13836 / NRRL 3357 / JCM 12722 / SRRC 167) protein is UstYa family oxidase aprY.